Here is a 552-residue protein sequence, read N- to C-terminus: Putative transport protein HSM_0534 (552 aa).

5 helical membrane-spanning segments follow: residues 4 to 24 (IAIT…IGHW), 28 to 48 (GVGL…HFMN), 67 to 87 (LILF…ASLL), 95 to 115 (GLAT…YKVV), and 157 to 177 (MAYA…MWLI). RCK C-terminal domains are found at residues 190–275 (KQFQ…VIGE) and 277–360 (IDMP…IIGN). The next 6 membrane-spanning stretches (helical) occupy residues 370 to 390 (MLPV…PFYI), 402 to 424 (AGGP…LYWF), 438 to 458 (IVLF…DTLV), 463 to 483 (LEWM…TGII), 495 to 515 (LCGL…ANAI), and 529 to 549 (VYPL…ILLW).

Belongs to the AAE transporter (TC 2.A.81) family. YidE subfamily.

The protein resides in the cell membrane. The protein is Putative transport protein HSM_0534 of Histophilus somni (strain 2336) (Haemophilus somnus).